We begin with the raw amino-acid sequence, 182 residues long: Isopentenyl-diphosphate Delta-isomerase (182 aa).

Residues histidine 25 and histidine 32 each coordinate Mn(2+). Residues 30-164 (LLHLAFSSWL…PWAFSPWMVM (135 aa)) form the Nudix hydrolase domain. Residue cysteine 67 is part of the active site. Histidine 69 contacts Mn(2+). Glutamate 87 contacts Mg(2+). Mn(2+) contacts are provided by glutamate 114 and glutamate 116. Glutamate 116 is a catalytic residue.

Belongs to the IPP isomerase type 1 family. Homodimer. Mg(2+) serves as cofactor. Mn(2+) is required as a cofactor.

It is found in the cytoplasm. The enzyme catalyses isopentenyl diphosphate = dimethylallyl diphosphate. Its pathway is isoprenoid biosynthesis; dimethylallyl diphosphate biosynthesis; dimethylallyl diphosphate from isopentenyl diphosphate: step 1/1. Functionally, catalyzes the 1,3-allylic rearrangement of the homoallylic substrate isopentenyl (IPP) to its highly electrophilic allylic isomer, dimethylallyl diphosphate (DMAPP). The protein is Isopentenyl-diphosphate Delta-isomerase of Escherichia coli (strain SMS-3-5 / SECEC).